The chain runs to 170 residues: Crossover junction endodeoxyribonuclease RuvC (170 aa).

Active-site residues include Asp9, Glu70, and Asp145. Mg(2+) contacts are provided by Asp9, Glu70, and Asp145.

This sequence belongs to the RuvC family. Homodimer which binds Holliday junction (HJ) DNA. The HJ becomes 2-fold symmetrical on binding to RuvC with unstacked arms; it has a different conformation from HJ DNA in complex with RuvA. In the full resolvosome a probable DNA-RuvA(4)-RuvB(12)-RuvC(2) complex forms which resolves the HJ. The cofactor is Mg(2+).

The protein localises to the cytoplasm. The enzyme catalyses Endonucleolytic cleavage at a junction such as a reciprocal single-stranded crossover between two homologous DNA duplexes (Holliday junction).. Functionally, the RuvA-RuvB-RuvC complex processes Holliday junction (HJ) DNA during genetic recombination and DNA repair. Endonuclease that resolves HJ intermediates. Cleaves cruciform DNA by making single-stranded nicks across the HJ at symmetrical positions within the homologous arms, yielding a 5'-phosphate and a 3'-hydroxyl group; requires a central core of homology in the junction. The consensus cleavage sequence is 5'-(A/T)TT(C/G)-3'. Cleavage occurs on the 3'-side of the TT dinucleotide at the point of strand exchange. HJ branch migration catalyzed by RuvA-RuvB allows RuvC to scan DNA until it finds its consensus sequence, where it cleaves and resolves the cruciform DNA. The chain is Crossover junction endodeoxyribonuclease RuvC from Chlamydia trachomatis serovar A (strain ATCC VR-571B / DSM 19440 / HAR-13).